The chain runs to 195 residues: Large ribosomal subunit protein eL15 (195 aa).

The segment at 174 to 195 (GHGRLGSAKSRPSIRANGRLRR) is disordered.

It belongs to the eukaryotic ribosomal protein eL15 family.

The sequence is that of Large ribosomal subunit protein eL15 from Picrophilus torridus (strain ATCC 700027 / DSM 9790 / JCM 10055 / NBRC 100828 / KAW 2/3).